The following is a 205-amino-acid chain: MLERGLSELGSDAGGDQRERLLRFLELLRKWNRVYSLTAIEDPCEGVRLHLLDSLSIASFLHGRRVLDVGTGPGLPGIPLAIVQPERRFVLLDCNAKKIRFVRQAVIELGLANVVPVQARIESFTDAEGFDCVLARAYASLAEIWTDAAPLLRTGGTVLALKGRRPEAELGDLPAGVAVGIHRLRVPGVEAERHLAELKPTGQDS.

S-adenosyl-L-methionine-binding positions include glycine 70, leucine 75, 121-122, and arginine 136; that span reads IE.

It belongs to the methyltransferase superfamily. RNA methyltransferase RsmG family.

The protein localises to the cytoplasm. It catalyses the reaction guanosine(527) in 16S rRNA + S-adenosyl-L-methionine = N(7)-methylguanosine(527) in 16S rRNA + S-adenosyl-L-homocysteine. Specifically methylates the N7 position of guanine in position 527 of 16S rRNA. This is Ribosomal RNA small subunit methyltransferase G from Methylococcus capsulatus (strain ATCC 33009 / NCIMB 11132 / Bath).